The sequence spans 198 residues: Ribonuclease HII (198 aa).

In terms of domain architecture, RNase H type-2 spans 3–194 (RRVCGVDEAG…VKRCLALGQQ (192 aa)). A divalent metal cation contacts are provided by aspartate 9, glutamate 10, and aspartate 101.

Belongs to the RNase HII family. Mn(2+) serves as cofactor. The cofactor is Mg(2+).

Its subcellular location is the cytoplasm. It carries out the reaction Endonucleolytic cleavage to 5'-phosphomonoester.. Functionally, endonuclease that specifically degrades the RNA of RNA-DNA hybrids. The sequence is that of Ribonuclease HII from Laribacter hongkongensis (strain HLHK9).